The following is a 319-amino-acid chain: Cytochrome f (319 aa).

Residues 1-35 (MFQQMQKISLKLLKTTFLFLFATFILVGLPSTSQA) form the signal peptide. Heme is bound by residues Tyr-36, Cys-56, Cys-59, and His-60. A helical transmembrane segment spans residues 285–305 (IQGLIAFFISVIIAQTFLVLK).

Belongs to the cytochrome f family. In terms of assembly, the 4 large subunits of the cytochrome b6-f complex are cytochrome b6, subunit IV (17 kDa polypeptide, petD), cytochrome f and the Rieske protein, while the 4 small subunits are PetG, PetL, PetM and PetN. The complex functions as a dimer. Heme serves as cofactor.

The protein localises to the plastid. The protein resides in the chloroplast thylakoid membrane. Component of the cytochrome b6-f complex, which mediates electron transfer between photosystem II (PSII) and photosystem I (PSI), cyclic electron flow around PSI, and state transitions. This is Cytochrome f from Chlorokybus atmophyticus (Soil alga).